A 260-amino-acid chain; its full sequence is Crotonyl-CoA hydratase (260 aa).

The active-site Nucleophile is glutamate 114. Glutamate 134 functions as the Proton acceptor in the catalytic mechanism.

It belongs to the enoyl-CoA hydratase/isomerase family. As to quaternary structure, homotetramer.

The protein localises to the cytoplasm. It carries out the reaction 3-hydroxybutanoyl-CoA = (2E)-butenoyl-CoA + H2O. The enzyme catalyses a short-chain (3S)-3-hydroxyacyl-CoA = a short-chain (2E)-enoyl-CoA + H2O. The protein operates within lipid metabolism; butanoate metabolism. Functionally, involved in syntrophic growth of S.wolfei with butyrate, as part of the butyrate oxidation pathway. Probably catalyzes the hydration of crotonyl-CoA to 3-hydroxybutyryl-CoA. This chain is Crotonyl-CoA hydratase, found in Syntrophomonas wolfei subsp. wolfei (strain DSM 2245B / Goettingen).